The chain runs to 31 residues: Cyclotide hyen-I (31 aa).

Positions 1 to 31 (GSTPCGESCVWIPCISGIVGCSCSNKVCYMD) form a cross-link, cyclopeptide (Gly-Asp). Intrachain disulfides connect cysteine 5/cysteine 21, cysteine 9/cysteine 23, and cysteine 14/cysteine 28.

This is a cyclic peptide. Detected in seeds (at protein level).

Its function is as follows. Probably participates in a plant defense mechanism. The protein is Cyclotide hyen-I of Pigea enneasperma (Spade flower).